The sequence spans 281 residues: 4-hydroxy-3-methylbut-2-enyl diphosphate reductase (281 aa).

Residue Cys12 coordinates [4Fe-4S] cluster. (2E)-4-hydroxy-3-methylbut-2-enyl diphosphate is bound by residues His41 and His74. Dimethylallyl diphosphate-binding residues include His41 and His74. Positions 41 and 74 each coordinate isopentenyl diphosphate. Cys96 provides a ligand contact to [4Fe-4S] cluster. Position 124 (His124) interacts with (2E)-4-hydroxy-3-methylbut-2-enyl diphosphate. His124 lines the dimethylallyl diphosphate pocket. His124 serves as a coordination point for isopentenyl diphosphate. Residue Glu126 is the Proton donor of the active site. Thr164 serves as a coordination point for (2E)-4-hydroxy-3-methylbut-2-enyl diphosphate. Cys193 is a [4Fe-4S] cluster binding site. Ser221, Asn223, and Ser265 together coordinate (2E)-4-hydroxy-3-methylbut-2-enyl diphosphate. Residues Ser221, Asn223, and Ser265 each coordinate dimethylallyl diphosphate. Residues Ser221, Asn223, and Ser265 each coordinate isopentenyl diphosphate.

Belongs to the IspH family. It depends on [4Fe-4S] cluster as a cofactor.

The enzyme catalyses isopentenyl diphosphate + 2 oxidized [2Fe-2S]-[ferredoxin] + H2O = (2E)-4-hydroxy-3-methylbut-2-enyl diphosphate + 2 reduced [2Fe-2S]-[ferredoxin] + 2 H(+). It catalyses the reaction dimethylallyl diphosphate + 2 oxidized [2Fe-2S]-[ferredoxin] + H2O = (2E)-4-hydroxy-3-methylbut-2-enyl diphosphate + 2 reduced [2Fe-2S]-[ferredoxin] + 2 H(+). The protein operates within isoprenoid biosynthesis; dimethylallyl diphosphate biosynthesis; dimethylallyl diphosphate from (2E)-4-hydroxy-3-methylbutenyl diphosphate: step 1/1. Its pathway is isoprenoid biosynthesis; isopentenyl diphosphate biosynthesis via DXP pathway; isopentenyl diphosphate from 1-deoxy-D-xylulose 5-phosphate: step 6/6. In terms of biological role, catalyzes the conversion of 1-hydroxy-2-methyl-2-(E)-butenyl 4-diphosphate (HMBPP) into a mixture of isopentenyl diphosphate (IPP) and dimethylallyl diphosphate (DMAPP). Acts in the terminal step of the DOXP/MEP pathway for isoprenoid precursor biosynthesis. The protein is 4-hydroxy-3-methylbut-2-enyl diphosphate reductase of Oleidesulfovibrio alaskensis (strain ATCC BAA-1058 / DSM 17464 / G20) (Desulfovibrio alaskensis).